A 224-amino-acid polypeptide reads, in one-letter code: ATP phosphoribosyltransferase (224 aa).

This sequence belongs to the ATP phosphoribosyltransferase family. Short subfamily. As to quaternary structure, heteromultimer composed of HisG and HisZ subunits.

The protein resides in the cytoplasm. The catalysed reaction is 1-(5-phospho-beta-D-ribosyl)-ATP + diphosphate = 5-phospho-alpha-D-ribose 1-diphosphate + ATP. It functions in the pathway amino-acid biosynthesis; L-histidine biosynthesis; L-histidine from 5-phospho-alpha-D-ribose 1-diphosphate: step 1/9. Catalyzes the condensation of ATP and 5-phosphoribose 1-diphosphate to form N'-(5'-phosphoribosyl)-ATP (PR-ATP). Has a crucial role in the pathway because the rate of histidine biosynthesis seems to be controlled primarily by regulation of HisG enzymatic activity. The sequence is that of ATP phosphoribosyltransferase from Cupriavidus taiwanensis (strain DSM 17343 / BCRC 17206 / CCUG 44338 / CIP 107171 / LMG 19424 / R1) (Ralstonia taiwanensis (strain LMG 19424)).